The primary structure comprises 103 residues: Small ribosomal subunit protein uS10 (103 aa).

It belongs to the universal ribosomal protein uS10 family. Part of the 30S ribosomal subunit.

In terms of biological role, involved in the binding of tRNA to the ribosomes. The sequence is that of Small ribosomal subunit protein uS10 from Marinomonas sp. (strain MWYL1).